Reading from the N-terminus, the 527-residue chain is Pyruvate kinase 2, cytosolic (527 aa).

A substrate-binding site is contributed by R58. Residues D60, S62, D92, and T93 each contribute to the K(+) site. Residue D60–W63 coordinates ATP. Residue K256 coordinates substrate. E258 is a Mg(2+) binding site. The substrate site is built by G281, N282, and T313. N282 is a binding site for Mg(2+).

Belongs to the pyruvate kinase family. As to quaternary structure, homotetramer. The cofactor is Mg(2+). It depends on K(+) as a cofactor.

Its subcellular location is the cytoplasm. It is found in the cytosol. The enzyme catalyses pyruvate + ATP = phosphoenolpyruvate + ADP + H(+). The protein operates within carbohydrate degradation; glycolysis; pyruvate from D-glyceraldehyde 3-phosphate: step 5/5. Its function is as follows. Key regulatory enzyme of the glycolytic pathway that catalyzes the final step of glycolysis, converting ADP and phosphoenolpyruvate (PEP) to ATP and pyruvate by essentially irreversible transphosphorylation. This chain is Pyruvate kinase 2, cytosolic, found in Oryza sativa subsp. indica (Rice).